A 242-amino-acid chain; its full sequence is Terpene cyclase dpfgB (242 aa).

The next 7 helical transmembrane spans lie at 15–37 (DVAW…NYVG), 51–71 (ALMA…IYPF), 75–95 (LEMY…YTAV), 112–132 (LPLI…ALAA), 141–161 (AWSA…QLLC), 169–189 (SYFL…QDIL), and 205–225 (LYIW…ICLW).

Belongs to the paxB family.

The protein localises to the membrane. The protein operates within secondary metabolite biosynthesis; terpenoid biosynthesis. Terpene cyclase; part of the gene cluster that mediates the biosynthesis of diterpenoid pyrones. The first step of the pathway is the synthesis of the alpha-pyrone moiety by the polyketide synthase dpfgA via condensation of one acetyl-CoA starter unit with 3 malonyl-CoA units and 2 methylations. The alpha-pyrone is then combined with geranylgeranyl pyrophosphate (GGPP) formed by the GGPP synthase dpfgD through the action of the prenyltransferase dpfgC to yield a linear alpha-pyrone diterpenoid. Subsequent steps in the diterpenoid pyrone biosynthetic pathway involve the decalin core formation, which is initiated by the epoxidation of the C10-C11 olefin by the FAD-dependent oxidoreductase dpfgE, and is followed by a cyclization cascade catalyzed by the terpene cyclase dpfgB. The short chain dehydrogenase/reductase dpfgG then oxidizes the 8S hydroxy group to a ketone and the short chain dehydrogenase/reductase dpfgH reduces the ketone to the 8R hydroxy group to yield higginsianin B. Higginsianin B is further methylated by the methyltransferase dpfgI to produce the intermediate named FDDP B. The cytochrome P450 monooxygenase dfgpJ then catalyzes a three-step oxidation at C-27 to generate a carboxylic acid as well as C-26 hydroxylation. Finally, methyltransferase dpfgK methylates the carboxylic acid generated by dpfgJ, yielding the final diterpenoid pyrones from the pathway which were named FDDP D and FDDP E. This Gibberella zeae (strain ATCC MYA-4620 / CBS 123657 / FGSC 9075 / NRRL 31084 / PH-1) (Wheat head blight fungus) protein is Terpene cyclase dpfgB.